We begin with the raw amino-acid sequence, 346 residues long: Methylthioribose-1-phosphate isomerase (346 aa).

Substrate-binding positions include 54 to 56, Arg91, and Gln192; that span reads RGA. The active-site Proton donor is Asp233. 243-244 is a binding site for substrate; that stretch reads NK.

The protein belongs to the eIF-2B alpha/beta/delta subunits family. MtnA subfamily.

It carries out the reaction 5-(methylsulfanyl)-alpha-D-ribose 1-phosphate = 5-(methylsulfanyl)-D-ribulose 1-phosphate. It participates in amino-acid biosynthesis; L-methionine biosynthesis via salvage pathway; L-methionine from S-methyl-5-thio-alpha-D-ribose 1-phosphate: step 1/6. In terms of biological role, catalyzes the interconversion of methylthioribose-1-phosphate (MTR-1-P) into methylthioribulose-1-phosphate (MTRu-1-P). The sequence is that of Methylthioribose-1-phosphate isomerase from Yersinia pseudotuberculosis serotype IB (strain PB1/+).